Reading from the N-terminus, the 1431-residue chain is 1-phosphatidylinositol 4,5-bisphosphate phosphodiesterase beta egl-8 (1431 aa).

In terms of domain architecture, PI-PLC X-box spans Met-340–Lys-491. His-355 is a catalytic residue. 3 residues coordinate Ca(2+): Asn-356, Glu-385, and Asp-387. His-403 is a catalytic residue. Glu-437 is a Ca(2+) binding site. Substrate-binding residues include Lys-489 and Lys-491. 2 disordered regions span residues Lys-510–Asp-601 and Arg-632–Ser-692. Residues Glu-543–Pro-556 are compositionally biased toward acidic residues. Composition is skewed to low complexity over residues Asn-572–Ser-586, Ser-652–Ile-661, and Ala-668–Ser-692. Positions Leu-758–Arg-874 constitute a PI-PLC Y-box domain. Substrate is bound by residues Ser-787 and Arg-814. Residues Asp-877–Phe-1002 form the C2 domain. Disordered stretches follow at residues Gln-1072–Asp-1119, Asp-1150–Ala-1176, and Asn-1188–Gly-1216. Residues Pro-1074–Pro-1113 are compositionally biased toward polar residues. Residues Lys-1135 to Gln-1166 are a coiled coil. The segment covering Asp-1150–Ile-1162 has biased composition (basic and acidic residues). Basic residues predominate over residues Arg-1191–Arg-1200. A compositionally biased stretch (low complexity) spans Thr-1204–Gly-1216. Coiled coils occupy residues Asp-1288–Met-1318 and Glu-1368–Gln-1402.

Ca(2+) is required as a cofactor. Expressed in most or all neurons with high expression in the head and tail ganglia and low expression in the motor neurons of the ventral cord. Expressed in the intestine (at protein level). In males, expressed in vas deferens, spicule protractor muscles, diagonal muscles and a male-specific neuron.

It is found in the perikaryon. The protein resides in the cell projection. Its subcellular location is the axon. The protein localises to the synapse. It localises to the cell junction. It is found in the adherens junction. It catalyses the reaction a 1,2-diacyl-sn-glycero-3-phospho-(1D-myo-inositol-4,5-bisphosphate) + H2O = 1D-myo-inositol 1,4,5-trisphosphate + a 1,2-diacyl-sn-glycerol + H(+). Functionally, mediates the production of the second messenger molecules diacylglycerol (DAG) and inositol 1,4,5-trisphosphate (IP3) which plays an important role in the regulation of intracellular signaling cascades. Required in the nervous system to modulate neuronal activity. Facilitates synaptic transmission at neuromuscular junctions by regulating the release of acetylcholine from the motor neurons and thus affecting locomotion. Plays a role in efficient egg laying and defecation. Involved in axon regeneration after injury. Plays a role in male mating behavior by regulating spicule insertion and sperm transfer. By triggering Ca(2+) transient via IP3-mediated activation of IPR3 receptor itr-1 in ASH sensory neurons, regulates avoidance behavior in response to nose touch. By activating tpa-1 via DAG production, required for the expression of antimicrobial peptide nlp-29 in response to fungal infection. During embryogenesis, may play a role in epidermal morphogenesis together with plc-1. This chain is 1-phosphatidylinositol 4,5-bisphosphate phosphodiesterase beta egl-8, found in Caenorhabditis elegans.